The primary structure comprises 611 residues: Alkyldihydroxyacetonephosphate synthase (611 aa).

The FAD-binding PCMH-type domain maps to 137 to 317 (VKNAPDLIVL…TEAVMKVHAV (181 aa)). FAD is bound by residues 169–175 (PMGGGSN), 237–243 (DSFEFST), 250–255 (TCSSGH), and 301–307 (EGTLGII). Substrate is bound at residue arginine 447. Tyrosine 508 serves as the catalytic Proton donor/acceptor. An important for enzyme activity region spans residues 544-546 (HHH). The Microbody targeting signal motif lies at 609–611 (PKL).

It belongs to the FAD-binding oxidoreductase/transferase type 4 family. Homodimer. Requires FAD as cofactor.

It localises to the peroxisome. It catalyses the reaction a long chain fatty alcohol + a 1-acylglycerone 3-phosphate = a 1-O-alkylglycerone 3-phosphate + a long-chain fatty acid + H(+). The protein operates within glycerolipid metabolism; ether lipid biosynthesis. Catalyzes the exchange of an acyl for a long-chain alkyl group and the formation of the ether bond in the biosynthesis of ether phospholipids. In Dictyostelium discoideum (Social amoeba), this protein is Alkyldihydroxyacetonephosphate synthase (eapA).